A 188-amino-acid chain; its full sequence is Elongation factor P (188 aa).

Residue Lys34 is modified to N6-(3,6-diaminohexanoyl)-5-hydroxylysine.

The protein belongs to the elongation factor P family. Post-translationally, may be beta-lysylated on the epsilon-amino group of Lys-34 by the combined action of EpmA and EpmB, and then hydroxylated on the C5 position of the same residue by EpmC (if this protein is present). Lysylation is critical for the stimulatory effect of EF-P on peptide-bond formation. The lysylation moiety may extend toward the peptidyltransferase center and stabilize the terminal 3-CCA end of the tRNA. Hydroxylation of the C5 position on Lys-34 may allow additional potential stabilizing hydrogen-bond interactions with the P-tRNA.

The protein resides in the cytoplasm. The protein operates within protein biosynthesis; polypeptide chain elongation. In terms of biological role, involved in peptide bond synthesis. Alleviates ribosome stalling that occurs when 3 or more consecutive Pro residues or the sequence PPG is present in a protein, possibly by augmenting the peptidyl transferase activity of the ribosome. Modification of Lys-34 is required for alleviation. The protein is Elongation factor P of Hamiltonella defensa subsp. Acyrthosiphon pisum (strain 5AT).